The sequence spans 638 residues: Zinc finger protein 143 (638 aa).

M1 is modified (N-acetylmethionine). K213 is covalently cross-linked (Glycyl lysine isopeptide (Lys-Gly) (interchain with G-Cter in SUMO2)). C2H2-type zinc fingers lie at residues 237-261 (FRCK…ERSH), 267-291 (YQCE…FRTH), 297-321 (YRCS…IRTH), and 327-351 (FKCP…IRTH). Phosphothreonine is present on T352. C2H2-type zinc fingers lie at residues 357-381 (YYCT…VRIH), 387-411 (YVCT…HVVH), and 417-440 (YNCN…RTAH). Residue K406 forms a Glycyl lysine isopeptide (Lys-Gly) (interchain with G-Cter in SUMO2) linkage.

This sequence belongs to the GLI C2H2-type zinc-finger protein family. Interacts with CHD8. Forms a complex with HCFC1 and ZNF143.

The protein resides in the nucleus. Functionally, transcriptional activator. Activates the gene for selenocysteine tRNA (tRNAsec). Binds to the SPH motif of small nuclear RNA (snRNA) gene promoters. Participates in efficient U6 RNA polymerase III transcription via its interaction with CHD8. In complex with HCFC1 and ZNF143, regulates the expression of several genes, including AP2S1, ESCO2, OPHN1, RBL1, UBXN8 and ZNF32. This is Zinc finger protein 143 (Znf143) from Mus musculus (Mouse).